Here is a 388-residue protein sequence, read N- to C-terminus: Flap endonuclease 1 (388 aa).

An N-domain region spans residues 1–105; sequence MGIKNLTSLI…GELAKRYARR (105 aa). Asp-34 lines the Mg(2+) pocket. Residue Arg-71 participates in DNA binding. The Mg(2+) site is built by Asp-87, Glu-159, Glu-161, Asp-180, and Asp-182. The interval 123 to 254 is I-domain; sequence DVQKFQKRTI…KKSFDMITKH (132 aa). Residue Glu-159 participates in DNA binding. 2 residues coordinate DNA: Gly-232 and Asp-234. Asp-234 contacts Mg(2+). Residues 338–346 are interaction with PCNA; that stretch reads VQTRIDTFF. Residues 349–388 form a disordered region; the sequence is IKRPRDEDAGSAKKKQKTVAKPGAAGSKKKPAAKKAAGKK. Positions 375–388 are enriched in basic residues; that stretch reads SKKKPAAKKAAGKK.

Belongs to the XPG/RAD2 endonuclease family. FEN1 subfamily. Interacts with PCNA. Three molecules of repG bind to one PCNA trimer with each molecule binding to one PCNA monomer. PCNA stimulates the nuclease activity without altering cleavage specificity. It depends on Mg(2+) as a cofactor. In terms of processing, phosphorylated. Phosphorylation upon DNA damage induces relocalization to the nuclear plasma.

The protein resides in the nucleus. Its subcellular location is the nucleolus. It is found in the nucleoplasm. The protein localises to the mitochondrion. Functionally, structure-specific nuclease with 5'-flap endonuclease and 5'-3' exonuclease activities involved in DNA replication and repair. During DNA replication, cleaves the 5'-overhanging flap structure that is generated by displacement synthesis when DNA polymerase encounters the 5'-end of a downstream Okazaki fragment. It enters the flap from the 5'-end and then tracks to cleave the flap base, leaving a nick for ligation. Also involved in the long patch base excision repair (LP-BER) pathway, by cleaving within the apurinic/apyrimidinic (AP) site-terminated flap. Acts as a genome stabilization factor that prevents flaps from equilibrating into structures that lead to duplications and deletions. Also possesses 5'-3' exonuclease activity on nicked or gapped double-stranded DNA, and exhibits RNase H activity. Also involved in replication and repair of rDNA and in repairing mitochondrial DNA. The polypeptide is Flap endonuclease 1 (Heterostelium pallidum (strain ATCC 26659 / Pp 5 / PN500) (Cellular slime mold)).